The sequence spans 274 residues: NAD kinase (274 aa).

The Proton acceptor role is filled by D50. NAD(+)-binding positions include 50-51, 126-127, R152, D154, 165-170, and A189; these read DG, NE, and TAYNKS.

The protein belongs to the NAD kinase family. A divalent metal cation serves as cofactor.

The protein localises to the cytoplasm. The catalysed reaction is NAD(+) + ATP = ADP + NADP(+) + H(+). Functionally, involved in the regulation of the intracellular balance of NAD and NADP, and is a key enzyme in the biosynthesis of NADP. Catalyzes specifically the phosphorylation on 2'-hydroxyl of the adenosine moiety of NAD to yield NADP. This Streptococcus gordonii (strain Challis / ATCC 35105 / BCRC 15272 / CH1 / DL1 / V288) protein is NAD kinase.